The following is a 264-amino-acid chain: Thymidylate synthase (264 aa).

Position 21 (Arg-21) interacts with dUMP. Position 51 (His-51) interacts with (6R)-5,10-methylene-5,6,7,8-tetrahydrofolate. 126–127 (RR) lines the dUMP pocket. Cys-146 acts as the Nucleophile in catalysis. DUMP-binding positions include 166–169 (RSAD), Asn-177, and 207–209 (HLY). Asp-169 is a binding site for (6R)-5,10-methylene-5,6,7,8-tetrahydrofolate. Position 263 (Ala-263) interacts with (6R)-5,10-methylene-5,6,7,8-tetrahydrofolate.

This sequence belongs to the thymidylate synthase family. Bacterial-type ThyA subfamily. As to quaternary structure, homodimer.

Its subcellular location is the cytoplasm. It catalyses the reaction dUMP + (6R)-5,10-methylene-5,6,7,8-tetrahydrofolate = 7,8-dihydrofolate + dTMP. The protein operates within pyrimidine metabolism; dTTP biosynthesis. Functionally, catalyzes the reductive methylation of 2'-deoxyuridine-5'-monophosphate (dUMP) to 2'-deoxythymidine-5'-monophosphate (dTMP) while utilizing 5,10-methylenetetrahydrofolate (mTHF) as the methyl donor and reductant in the reaction, yielding dihydrofolate (DHF) as a by-product. This enzymatic reaction provides an intracellular de novo source of dTMP, an essential precursor for DNA biosynthesis. The protein is Thymidylate synthase of Legionella pneumophila (strain Corby).